The chain runs to 511 residues: S-layer protein B (511 aa).

An N-terminal signal peptide occupies residues 1 to 24 (MVKYMNLIVLGMLMFGVFVTLSLG). The stretch at 358-392 (IQRLQSEVSVLESEVDQLKVEIQSLNETLTLQASE) forms a coiled coil. A helical membrane pass occupies residues 487-507 (GGIILGVIALIIAIVAVVLVF).

This sequence belongs to the Sulfolobales SlaB family. The mushroom-shaped unit cells of the Sulfolobales' S-layers may consist of three SlaB subunits and six SlaA subunits.

The protein localises to the secreted. The protein resides in the cell wall. Its subcellular location is the S-layer. It localises to the cell membrane. In terms of biological role, S-layer small protein. May anchor the complex to the cell membrane. The polypeptide is S-layer protein B (Acidianus ambivalens (Desulfurolobus ambivalens)).